The primary structure comprises 101 residues: Aspartyl/glutamyl-tRNA(Asn/Gln) amidotransferase subunit C (101 aa).

Positions 75–101 (QEALSGAPDAEEQRFRVPRILDEDVAS) are disordered. Residues 85-101 (EEQRFRVPRILDEDVAS) are compositionally biased toward basic and acidic residues.

It belongs to the GatC family. Heterotrimer of A, B and C subunits.

It catalyses the reaction L-glutamyl-tRNA(Gln) + L-glutamine + ATP + H2O = L-glutaminyl-tRNA(Gln) + L-glutamate + ADP + phosphate + H(+). It carries out the reaction L-aspartyl-tRNA(Asn) + L-glutamine + ATP + H2O = L-asparaginyl-tRNA(Asn) + L-glutamate + ADP + phosphate + 2 H(+). Functionally, allows the formation of correctly charged Asn-tRNA(Asn) or Gln-tRNA(Gln) through the transamidation of misacylated Asp-tRNA(Asn) or Glu-tRNA(Gln) in organisms which lack either or both of asparaginyl-tRNA or glutaminyl-tRNA synthetases. The reaction takes place in the presence of glutamine and ATP through an activated phospho-Asp-tRNA(Asn) or phospho-Glu-tRNA(Gln). This is Aspartyl/glutamyl-tRNA(Asn/Gln) amidotransferase subunit C from Salinispora arenicola (strain CNS-205).